The chain runs to 334 residues: Malate dehydrogenase, cytoplasmic (334 aa).

Position 11–17 (11–17) interacts with NAD(+); that stretch reads GAAGQIA. Substrate is bound by residues arginine 92 and arginine 98. NAD(+) contacts are provided by residues asparagine 105, glutamine 112, and 129–131; that span reads VGN. Asparagine 131 and arginine 162 together coordinate substrate. Histidine 187 (proton acceptor) is an active-site residue.

It belongs to the LDH/MDH superfamily. MDH type 2 family. As to quaternary structure, homodimer.

The protein resides in the cytoplasm. It is found in the cytosol. The enzyme catalyses (S)-malate + NAD(+) = oxaloacetate + NADH + H(+). It catalyses the reaction (S)-2-hydroxyglutarate + NAD(+) = 2-oxoglutarate + NADH + H(+). In terms of biological role, catalyzes the reduction of aromatic alpha-keto acids in the presence of NADH. Plays essential roles in the malate-aspartate shuttle and the tricarboxylic acid cycle, important in mitochondrial NADH supply for oxidative phosphorylation. Catalyzes the reduction of 2-oxoglutarate to 2-hydroxyglutarate, leading to elevated reactive oxygen species (ROS). The protein is Malate dehydrogenase, cytoplasmic (mdh1) of Xenopus laevis (African clawed frog).